Here is a 713-residue protein sequence, read N- to C-terminus: Protein argonaute (713 aa).

The tract at residues 18–129 (EFIPKEVHFY…IKNIRKHKVV (112 aa)) is N-terminal domain. Residues 164–257 (HLWDFVNRDK…FAPQFCNLVF (94 aa)) form the PAZ domain. The interval 213 to 218 (HIIKYY) is binds 3'-end of gDNA. The mid domain stretch occupies residues 346–488 (DVPEIIRNKN…QIMGKLGIKY (143 aa)). A Piwi domain is found at 426 to 699 (CFALIIGKEK…FVKALGKNWK (274 aa)). Positions 457, 479, and 483 each coordinate a divalent metal cation. The binds 5'-phosphorylated end of gDNA stretch occupies residues 457–460 (QNIL). Active-site residues include Asp-504, Glu-541, and Asp-570. Asp-504 serves as a coordination point for Mn(2+). Asp-570 contacts Mn(2+). Binds 5'-phosphorylated end of gDNA regions lie at residues 625–632 (HKTPFGSN) and 678–679 (LR). Asp-688 is a catalytic residue. The Mn(2+) site is built by Asp-688 and Ile-713.

The protein belongs to the argonaute family. Long pAgo subfamily. A divalent metal cation is required as a cofactor.

Its activity is regulated as follows. DNA cleavage is inhibited by EDTA. In terms of biological role, a DNA-guided ssDNA endonuclease that may play a role in defense against invading genetic elements. Uses short ssDNA sequences as guides (gDNA) to bind complementary target strands, resulting in slicing of the target DNA (tDNA). Endonucleolytically cleaves tDNA (the gDNA indicates where to cleave); two major and two minor products are seen which correspond to cleavage sites between nucleotides 9/10, 10/11, 13/14, and 14/15 downstream of the target residue base-paired with the 5'-end of the gDNA. Efficient guide-dependent tDNA cleavage requires a minimal length of 15 bp and is maximal at 19 bp. Prefers gDNA with 5'-phosphorylated purines and 3'-pyrimidines; changing these bases alters the cleavage activity and patterns. Also has guide-independent activity on tDNA called 'chopping'. Probably a first round of guide-independent activity on an invading plasmid or virus would generate guide DNAs for subsequent, more efficient, guide-dependent degradation of invading nucleic acids. Has no activity on substrate with a mismatch at positions 10 and 11, on ssDNA or RNA, nor on DNA:RNA hybrids. Digests longer (750 bp) dsDNA as well as circular plasmid and naked genomic DNA, but not chromatin, in a guide DNA-independent manner. Addition of endogenous histone A3 protects DNA from cleavage, while cleavage is insensitive to methylation. When plasmid encoding active or mutated protein (Ala-541) is transformed into Sulfolobus acidocaldarius about 25-fold fewer transformants are found with active protein; reduced levels of plasmid are found in wild-type transformed cells. While S.acidocaldarius grows at a similar temperature to M.jannaschii (70 to 80 degrees Celsius) it has very different histone-like proteins, which presumably do not protect against MjAgo. Binds ssDNA, dsDNA and DNA-RNA hybrids; binding is most efficient with dsDNA. This is Protein argonaute from Methanocaldococcus jannaschii (strain ATCC 43067 / DSM 2661 / JAL-1 / JCM 10045 / NBRC 100440) (Methanococcus jannaschii).